The following is a 542-amino-acid chain: MFSLQKKALQHIYMTPENASQLTKDLLQHLGLYWNGPIIKMDTVVHLHNKIFSNRSVLKYALAKQANITIIKTLVLWVEPEYALAQALKHNRKDVLECIFSYHLTTPKYHHIMHLTSSQELFEFFHLFICKSKNYNARMECLLYAATLYNFPNILEKNREYIIRYSIGNSLFAIACKERHIHLIAWFVTAGVLDTYDDSMLFNTAFKLGDYSLLEVACDLPIIYPDYLIISMMQTAIQKNYFRFFKKLLTHFNIYRQIIITDAAYYNRRKILLLLLKQNIFNNFAILCALSAAIKGHASKKTLNLLISQLDSQMTVVDSVYYSIIKYNNIDCIPLLMQIKTFRMETLVSIAVHGNNINIIAACKAFLPKDTLYHLVLKMAIVSRNYKLFKLYTEKENPMYIFTTIKAIISNLVNYTVVQAVAIEYLRKFHQERQLPIVPLLMVLAEHNYITKFKKTCYAANMSDQKVKRALIKCLFIASQKNYCQIFKYCFGSLLKVLSKHERVKFFNSVVFAKKLASYYDHQNMIHLIDSLIERFRYLIKD.

The protein belongs to the asfivirus MGF 505 family.

In terms of biological role, plays a role in virus cell tropism, and may be required for efficient virus replication in macrophages. The chain is Protein MGF 505-11L from African swine fever virus (isolate Warthog/Namibia/Wart80/1980) (ASFV).